Here is a 272-residue protein sequence, read N- to C-terminus: Large ribosomal subunit protein uL2cz/uL2cy (272 aa).

The span at Met-1–Asn-13 shows a compositional bias: polar residues. 2 disordered regions span residues Met-1 to Asn-27 and Asn-222 to Lys-272.

It belongs to the universal ribosomal protein uL2 family. In terms of assembly, part of the 50S ribosomal subunit.

Its subcellular location is the plastid. The protein resides in the chloroplast. This chain is Large ribosomal subunit protein uL2cz/uL2cy (rpl2-A), found in Buxus microphylla (Littleleaf boxwood).